The following is a 236-amino-acid chain: Uridylate kinase (236 aa).

An ATP-binding site is contributed by 8–11; sequence KLSG. Residues 16–21 form an involved in allosteric activation by GTP region; it reads GEQGYG. Residues Gly51 and Arg55 each contribute to the ATP site. UMP contacts are provided by residues Asp70 and 131–138; that span reads TGNPYFST. 3 residues coordinate ATP: Asn159, Tyr165, and Asp168.

This sequence belongs to the UMP kinase family. In terms of assembly, homohexamer.

Its subcellular location is the cytoplasm. The enzyme catalyses UMP + ATP = UDP + ADP. Its pathway is pyrimidine metabolism; CTP biosynthesis via de novo pathway; UDP from UMP (UMPK route): step 1/1. Allosterically activated by GTP. Inhibited by UTP. In terms of biological role, catalyzes the reversible phosphorylation of UMP to UDP. This chain is Uridylate kinase, found in Shouchella clausii (strain KSM-K16) (Alkalihalobacillus clausii).